The sequence spans 201 residues: Alpha-1-acid glycoprotein (201 aa).

The N-terminal stretch at 1–18 is a signal peptide; sequence MALPWALAVLSLLPLLHA. Residues asparagine 25, asparagine 33, asparagine 87, asparagine 93, asparagine 103, and asparagine 169 are each glycosylated (N-linked (GlcNAc...) asparagine). The cysteines at positions 90 and 183 are disulfide-linked.

It belongs to the calycin superfamily. Lipocalin family.

It localises to the secreted. Functions as a transport protein in the blood stream. Binds various ligands in the interior of its beta-barrel domain. Appears to function in modulating the activity of the immune system during the acute-phase reaction. In Oryctolagus cuniculus (Rabbit), this protein is Alpha-1-acid glycoprotein (ORM1).